The sequence spans 63 residues: Large ribosomal subunit protein uL29 (63 aa).

Belongs to the universal ribosomal protein uL29 family.

In Marinomonas sp. (strain MWYL1), this protein is Large ribosomal subunit protein uL29.